A 239-amino-acid polypeptide reads, in one-letter code: Ribonuclease PH (239 aa).

Phosphate contacts are provided by residues arginine 86 and 124–126 (GTR).

Belongs to the RNase PH family. In terms of assembly, homohexameric ring arranged as a trimer of dimers.

It catalyses the reaction tRNA(n+1) + phosphate = tRNA(n) + a ribonucleoside 5'-diphosphate. Its function is as follows. Phosphorolytic 3'-5' exoribonuclease that plays an important role in tRNA 3'-end maturation. Removes nucleotide residues following the 3'-CCA terminus of tRNAs; can also add nucleotides to the ends of RNA molecules by using nucleoside diphosphates as substrates, but this may not be physiologically important. Probably plays a role in initiation of 16S rRNA degradation (leading to ribosome degradation) during starvation. This chain is Ribonuclease PH, found in Rickettsia akari (strain Hartford).